Consider the following 195-residue polypeptide: Rho-related protein racB (195 aa).

Residue 10–17 (GDGAVGKT) coordinates GTP. Positions 32-40 (YVPTVFDNY) match the Effector region motif. Residues 57–61 (DTAGQ) and 115–118 (TKCD) each bind GTP. C192 is subject to Cysteine methyl ester. C192 carries S-geranylgeranyl cysteine lipidation. Positions 193–195 (SIL) are cleaved as a propeptide — removed in mature form.

It belongs to the small GTPase superfamily. Rho family. Interacts with pakB.

It localises to the cell membrane. The sequence is that of Rho-related protein racB (racB) from Dictyostelium discoideum (Social amoeba).